Here is a 265-residue protein sequence, read N- to C-terminus: 3-methyl-2-oxobutanoate hydroxymethyltransferase (265 aa).

Mg(2+) contacts are provided by Asp-44 and Asp-83. 3-methyl-2-oxobutanoate is bound by residues 44–45 (DS), Asp-83, and Lys-113. Glu-115 contacts Mg(2+). Catalysis depends on Glu-183, which acts as the Proton acceptor.

The protein belongs to the PanB family. In terms of assembly, homodecamer; pentamer of dimers. It depends on Mg(2+) as a cofactor.

The protein localises to the cytoplasm. It catalyses the reaction 3-methyl-2-oxobutanoate + (6R)-5,10-methylene-5,6,7,8-tetrahydrofolate + H2O = 2-dehydropantoate + (6S)-5,6,7,8-tetrahydrofolate. Its pathway is cofactor biosynthesis; (R)-pantothenate biosynthesis; (R)-pantoate from 3-methyl-2-oxobutanoate: step 1/2. Functionally, catalyzes the reversible reaction in which hydroxymethyl group from 5,10-methylenetetrahydrofolate is transferred onto alpha-ketoisovalerate to form ketopantoate. In Leptospira interrogans serogroup Icterohaemorrhagiae serovar copenhageni (strain Fiocruz L1-130), this protein is 3-methyl-2-oxobutanoate hydroxymethyltransferase.